The following is an 82-amino-acid chain: Putative membrane protein insertion efficiency factor (82 aa).

The tract at residues 63 to 82 (PGGHDPVPESTILSKEKSVK) is disordered.

It belongs to the UPF0161 family.

Its subcellular location is the cell inner membrane. Its function is as follows. Could be involved in insertion of integral membrane proteins into the membrane. This Protochlamydia amoebophila (strain UWE25) protein is Putative membrane protein insertion efficiency factor.